A 554-amino-acid polypeptide reads, in one-letter code: Valerianol synthase TPS1A (554 aa).

Asp307 and Asp311 together coordinate Mg(2+). A DDXXD motif motif is present at residues 326–330 (VQRWD). The Mg(2+) site is built by Asp452, Ser456, and Glu460.

It belongs to the terpene synthase family. The cofactor is Mg(2+). Expressed in flowers.

The enzyme catalyses (2E,6E)-farnesyl diphosphate + H2O = valerianol + diphosphate. It participates in secondary metabolite biosynthesis; terpenoid biosynthesis. Its function is as follows. Terpene synthase that catalyzes the biosynthesis of the terpene valerianol, which is a volatile compound of floral scent. This chain is Valerianol synthase TPS1A, found in Camellia hiemalis (Camellia).